A 293-amino-acid polypeptide reads, in one-letter code: MPLIIPENIPAYELLKEHAFIMGLRRAKHQDIRPQEILIVNLMPKKIETENQILSLLANSPLQVNITLLATTSYVGKNTPFTHLEKFYKGLEEVKKHKFDGAIVTGAPVEQMDFEKVAYWEELLEIFDFLKQNVTSSMYICWGAMAALKYFYGVDKISLDKKIFGVYKHDKVSPDLLLTNLDEKVLMPHSRHSSMDEEQILALQKQGKLKILLRNKKIGSALLRDEKNIFILGHLEYFKETLHQEYVRDNFIQKAKNYYDKKGNIKYNWRSNANTIFANWLNYDVYQSTPFVL.

C141 functions as the Acyl-thioester intermediate in the catalytic mechanism. Positions 162 and 190 each coordinate substrate. The Proton acceptor role is filled by H234. E236 is a catalytic residue. R248 contacts substrate.

Belongs to the MetA family.

It is found in the cytoplasm. The enzyme catalyses L-homoserine + acetyl-CoA = O-acetyl-L-homoserine + CoA. It functions in the pathway amino-acid biosynthesis; L-methionine biosynthesis via de novo pathway; O-acetyl-L-homoserine from L-homoserine: step 1/1. Functionally, transfers an acetyl group from acetyl-CoA to L-homoserine, forming acetyl-L-homoserine. The chain is Homoserine O-acetyltransferase from Campylobacter jejuni subsp. jejuni serotype O:2 (strain ATCC 700819 / NCTC 11168).